The chain runs to 1063 residues: Structural polyprotein (1063 aa).

The segment at 1–131 is disordered; sequence MASTTPITME…LGPPTNPFQA (131 aa). The span at 18 to 34 shows a compositional bias: low complexity; it reads AQSRALRAGLAAGASQS. The interval 30–69 is human C1QBP/SF2P32-binding; sequence GASQSRRPRPPRQRDSSTSGDDSGRDSGGPRRRRGNRGRG. S46 carries the phosphoserine; by host modification. Over residues 59 to 69 the composition is skewed to basic residues; the sequence is PRRRRGNRGRG. Over residues 70–87 the composition is skewed to basic and acidic residues; the sequence is QRKDWSRAPPPPEERQES. Positions 93-107 are enriched in pro residues; that stretch reads APKPSRAPPQQPQPP. C153 and C197 are oxidised to a cystine. Residues 279–300 form a functions as E2 signal peptide region; that stretch reads GAPQAFLAGLLLAAVAVGTARA. The Extracellular segment spans residues 301-534; the sequence is GLQPRADMAA…LWLATANALS (234 aa). N353, N371, N410, and N429 each carry an N-linked (GlcNAc...) asparagine; by host glycan. Residues 535–555 traverse the membrane as a helical segment; that stretch reads LDHAFAAFVLLVPWVLIFMVC. Residues 556–582 lie on the Cytoplasmic side of the membrane; that stretch reads RRACRRRGAAAALTAVVLQGYNPPAYG. The interval 563 to 582 is functions as E1 signal peptide; the sequence is GAAAALTAVVLQGYNPPAYG. Over 583 to 1028 the chain is Extracellular; the sequence is EEAFTYLCTA…QTWAEWAAAH (446 aa). 8 cysteine pairs are disulfide-bonded: C590/C595, C619/C824, C641/C653, C699/C712, C758/C767, C807/C817, C931/C934, and C950/C983. N658 carries an N-linked (GlcNAc...) asparagine; by host glycan. Residues N670 and A671 each contribute to the Ca(2+) site. 2 residues coordinate Ca(2+): D718 and T719. Residues N759 and N791 are each glycosylated (N-linked (GlcNAc...) asparagine; by host). O-linked (GalNAc...) threonine; by host glycosylation is found at T1011 and T1012. A helical membrane pass occupies residues 1029 to 1049; the sequence is WWQLTLGAICALLLAGLLACC. The Cytoplasmic segment spans residues 1050–1063; the sequence is AKCLYYLRGAIAPR.

In terms of assembly, homodimer; further assembles into homooligomer. Interacts with human C1QBP. Interacts (via N-terminus) with protease/methyltransferase p150. As to quaternary structure, heterodimer with spike glycoprotein E2. Heterodimer with spike glycoprotein E1. Structural polyprotein: Specific enzymatic cleavages in vivo yield mature proteins. Two signal peptidase-mediated cleavages within the polyprotein produce the structural proteins capsid, E2, and E1. The E2 signal peptide remains attached to the C-terminus of the capsid protein after cleavage by the signal peptidase. Another signal peptide at E2 C-terminus directs E1 to the ER, with a similar mechanism. In terms of processing, contains three N-linked oligosaccharides. Post-translationally, capsid is phosphorylated on Ser-46 by host. This phosphorylation negatively regulates capsid protein RNA-binding activity. Dephosphorylated by human PP1A.

It is found in the virion. The protein resides in the host cytoplasm. Its subcellular location is the host mitochondrion. It localises to the virion membrane. The protein localises to the host Golgi apparatus membrane. Functionally, capsid protein interacts with genomic RNA and assembles into icosahedric core particles 65-70 nm in diameter. The resulting nucleocapsid eventually associates with the cytoplasmic domain of E2 at the cell membrane, leading to budding and formation of mature virions from host Golgi membranes. Phosphorylation negatively regulates RNA-binding activity, possibly delaying virion assembly during the viral replication phase. Capsid protein dimerizes and becomes disulfide-linked in the virion. Modulates genomic RNA replication. Modulates subgenomic RNA synthesis by interacting with human C1QBP/SF2P32. Induces both perinuclear clustering of mitochondria and the formation of electron-dense intermitochondrial plaques, both hallmarks of rubella virus infected cells. Induces apoptosis when expressed in transfected cells. Responsible for viral attachment to target host cell, by binding to the cell receptor. Its transport to the plasma membrane depends on interaction with E1 protein. The surface glycoproteins display an irregular helical organization and a pseudo-tetrameric inner nucleocapsid arrangement. Its function is as follows. Class II viral fusion protein. Fusion activity is inactive as long as E1 is bound to E2 in mature virion. After virus attachment to target cell and clathrin-mediated endocytosis, acidification of the endosome would induce dissociation of E1/E2 heterodimer and concomitant trimerization of the E1 subunits. This E1 homotrimer is fusion active, and promotes release of viral nucleocapsid in cytoplasm after endosome and viral membrane fusion. The cytoplasmic tail of spike glycoprotein E1 modulates virus release. The surface glycoproteins display an irregular helical organization and a pseudo-tetrameric inner nucleocapsid arrangement. This Homo sapiens (Human) protein is Structural polyprotein.